The primary structure comprises 282 residues: S-formylglutathione hydrolase (282 aa).

Residue lysine 4 is modified to N6-succinyllysine. Serine 149 (charge relay system) is an active-site residue. Lysine 200 carries the post-translational modification N6-acetyllysine. Catalysis depends on charge relay system residues aspartate 226 and histidine 260.

Belongs to the esterase D family. As to quaternary structure, homodimer.

Its subcellular location is the cytoplasm. The protein resides in the cytoplasmic vesicle. It carries out the reaction S-formylglutathione + H2O = formate + glutathione + H(+). Serine hydrolase involved in the detoxification of formaldehyde. The polypeptide is S-formylglutathione hydrolase (Esd) (Rattus norvegicus (Rat)).